A 651-amino-acid chain; its full sequence is ATP-dependent zinc metalloprotease FtsH (651 aa).

Residues 1 to 134 lie on the Extracellular side of the membrane; that stretch reads MIVFATILFG…FTTDPQTAGP (134 aa). Residues 135–155 traverse the membrane as a helical segment; the sequence is WARAIAVMAPFVLILLLFFLM. The Cytoplasmic segment spans residues 156–651; it reads TRTGRSASQS…PAMSVNGHRG (496 aa). Position 229-236 (229-236) interacts with ATP; that stretch reads GPPGTGKT. Histidine 451 serves as a coordination point for Zn(2+). Glutamate 452 is a catalytic residue. Positions 455 and 527 each coordinate Zn(2+).

In the central section; belongs to the AAA ATPase family. It in the C-terminal section; belongs to the peptidase M41 family. Homohexamer. Requires Zn(2+) as cofactor.

It is found in the cell membrane. Its function is as follows. Acts as a processive, ATP-dependent zinc metallopeptidase for both cytoplasmic and membrane proteins. Plays a role in the quality control of integral membrane proteins. This Rubrobacter xylanophilus (strain DSM 9941 / JCM 11954 / NBRC 16129 / PRD-1) protein is ATP-dependent zinc metalloprotease FtsH.